The following is an 856-amino-acid chain: Wall-associated receptor kinase 17 (856 aa).

The N-terminal stretch at 1–42 (MPSRSPACRPRGRNRRSAADAVARPLALALILVSTLPRAAHS) is a signal peptide. N-linked (GlcNAc...) asparagine glycans are attached at residues Asn171 and Asn234. The EGF-like 1 domain maps to 297–334 (FEKLCKYGTCVDAPTGAGYLCKCPSGYDGNPYVSDGCQ). 5 disulfides stabilise this stretch: Cys301-Cys306, Cys319-Cys333, Cys339-Cys353, Cys347-Cys362, and Cys364-Cys379. The EGF-like 2; calcium-binding domain maps to 335–380 (DINECRNYNSNNCTYQNLCNNTLGGYTCSCPENNIGDGYRTGTGCN). Asn346 and Asn354 each carry an N-linked (GlcNAc...) asparagine glycan. The N-linked (GlcNAc...) asparagine glycan is linked to Asn380. A helical transmembrane segment spans residues 452-470 (VLGVSLVLMVTTTTAASCY). In terms of domain architecture, Protein kinase spans 527 to 805 (YSESRILGRG…VLQELRRSFT (279 aa)). Residues 533–541 (LGRGGQGTV) and Lys555 contribute to the ATP site. Catalysis depends on Asp652, which acts as the Proton acceptor. The interval 816–844 (SIQENSEQEEKHLHESRSIPSLQSSEVST) is disordered. The span at 823–832 (QEEKHLHESR) shows a compositional bias: basic and acidic residues. Over residues 833–844 (SIPSLQSSEVST) the composition is skewed to polar residues.

This sequence belongs to the protein kinase superfamily. Ser/Thr protein kinase family. In terms of assembly, interacts with WAK17 isoform 2; the interaction is direct. Interacts with LRR5; the interaction is direct. Interacts with WAK17 isoform 1; the interaction is direct. As to quaternary structure, (Microbial infection) Interacts with G.zeae CFEM1 (via CFEM domain); the interaction is direct. Interacts with G.zeae CFEMN1; the interaction is direct. Interacts with G.zeae CFEM5; the interaction is direct. Mn(2+) is required as a cofactor. Mg(2+) serves as cofactor.

The protein resides in the cell membrane. The catalysed reaction is L-seryl-[protein] + ATP = O-phospho-L-seryl-[protein] + ADP + H(+). It catalyses the reaction L-threonyl-[protein] + ATP = O-phospho-L-threonyl-[protein] + ADP + H(+). Kinase that contributes to activation of the hypersensitive response, a form of programmed cell death, upon fungal infection. Its function is as follows. Secreted protein that contributes to activation of the hypersensitive response, a form of programmed cell death, upon fungal infection. May sense the presence of fungal material and relay the signal to WAK17 isoform 1. The chain is Wall-associated receptor kinase 17 from Zea mays (Maize).